A 492-amino-acid polypeptide reads, in one-letter code: Cysteine--tRNA ligase (492 aa).

Residue Cys31 coordinates Zn(2+). The 'HIGH' region motif lies at 33 to 43; it reads PTVYGDPHLGH. 3 residues coordinate Zn(2+): Cys226, His251, and Glu255. Residues 283-287 carry the 'KMSKS' region motif; it reads KMGKS. Lys286 is an ATP binding site.

The protein belongs to the class-I aminoacyl-tRNA synthetase family. Monomer. It depends on Zn(2+) as a cofactor.

It localises to the cytoplasm. The catalysed reaction is tRNA(Cys) + L-cysteine + ATP = L-cysteinyl-tRNA(Cys) + AMP + diphosphate. The polypeptide is Cysteine--tRNA ligase (Azobacteroides pseudotrichonymphae genomovar. CFP2).